Consider the following 256-residue polypeptide: MASLYFVTGTDTEVGKTYCTAKTVERMRECGQRVGVYKPVASGCELRADGQRYSVDAATLWQAAGRPKNIDAVCPQRFLAALSPPQSAAREGVKVDTRQLRDGLAIWCDGDFDVVMIEGAGGLFSPISDDWLNVDLAIEMKRWSDQNGHSFELLLVAPDRLGVLHHVISTSRAAESAGIPIAGLILNRMDDHADESTQTNAEDLRRWCGIPMVASVRQPSGPLVVFSGPNGRNASGETSRETAGGVNFLNQTTIRR.

Residue 13 to 18 (EVGKTY) participates in ATP binding. Residue Thr17 participates in Mg(2+) binding. Lys38 is a catalytic residue. Ser42 serves as a coordination point for substrate. Residues Asp56, 118–121 (EGAG), and 187–188 (NR) contribute to the ATP site. Mg(2+)-binding residues include Asp56 and Glu118.

The protein belongs to the dethiobiotin synthetase family. Homodimer. It depends on Mg(2+) as a cofactor.

It localises to the cytoplasm. The catalysed reaction is (7R,8S)-7,8-diammoniononanoate + CO2 + ATP = (4R,5S)-dethiobiotin + ADP + phosphate + 3 H(+). It participates in cofactor biosynthesis; biotin biosynthesis; biotin from 7,8-diaminononanoate: step 1/2. Catalyzes a mechanistically unusual reaction, the ATP-dependent insertion of CO2 between the N7 and N8 nitrogen atoms of 7,8-diaminopelargonic acid (DAPA, also called 7,8-diammoniononanoate) to form a ureido ring. In Rhodopirellula baltica (strain DSM 10527 / NCIMB 13988 / SH1), this protein is ATP-dependent dethiobiotin synthetase BioD.